The chain runs to 492 residues: Katanin p60 ATPase-containing subunit A1 (492 aa).

A disordered region spans residues 91–158; sequence PAHDGEVWSL…MKPVRAREKK (68 aa). A compositionally biased stretch (polar residues) spans 138–147; it reads LPSSKNTNNV. 250-257 provides a ligand contact to ATP; that stretch reads GPPGTGKT.

This sequence belongs to the AAA ATPase family. Katanin p60 subunit A1 subfamily. Can homooligomerize into hexameric rings, which may be promoted by interaction with microtubules. Interacts with katnb1, which may serve as a targeting subunit.

The protein resides in the cytoplasm. It localises to the cytoskeleton. The protein localises to the microtubule organizing center. Its subcellular location is the centrosome. It is found in the spindle pole. The protein resides in the spindle. The enzyme catalyses n ATP + n H2O + a microtubule = n ADP + n phosphate + (n+1) alpha/beta tubulin heterodimers.. Its activity is regulated as follows. ATPase activity is stimulated by microtubules, which promote homooligomerization. ATP-dependent microtubule severing is stimulated by interaction with katnb1. In terms of biological role, catalytic subunit of a complex which severs microtubules in an ATP-dependent manner. Microtubule severing may promote rapid reorganization of cellular microtubule arrays and the release of microtubules from the centrosome following nucleation. The polypeptide is Katanin p60 ATPase-containing subunit A1 (katna1) (Xenopus tropicalis (Western clawed frog)).